The primary structure comprises 250 residues: Anamorsin homolog 1 (250 aa).

An N-terminal SAM-like domain region spans residues 1 to 104; it reads MNLKITINQQ…KKLNIPQQEF (104 aa). The tract at residues 104–149 is linker; it reads FNNCYGKYDYIEQKFQNQINFFKQVDINGKQEIIDENELLDDGVQV. [2Fe-2S] cluster is bound by residues Cys155, Cys162, Cys165, and Cys167. The interval 155–167 is fe-S binding site A; the sequence is CASKPRACANCTC. [4Fe-4S] cluster is bound by residues Cys193, Cys196, Cys204, and Cys207. 2 consecutive short sequence motifs (cx2C motif) follow at residues 193–196 and 204–207; these read CGSC and CANC. The fe-S binding site B stretch occupies residues 193–207; the sequence is CGSCYLGDAFRCANC.

The protein belongs to the anamorsin family. In terms of assembly, monomer. The cofactor is [2Fe-2S] cluster. Requires [4Fe-4S] cluster as cofactor.

The protein resides in the cytoplasm. It is found in the mitochondrion intermembrane space. Component of the cytosolic iron-sulfur (Fe-S) protein assembly (CIA) machinery. Required for the maturation of extramitochondrial Fe-S proteins. Part of an electron transfer chain functioning in an early step of cytosolic Fe-S biogenesis, facilitating the de novo assembly of a [4Fe-4S] cluster on the cytosolic Fe-S scaffold complex. Electrons are transferred from NADPH via a FAD- and FMN-containing diflavin oxidoreductase. Together with the diflavin oxidoreductase, also required for the assembly of the diferric tyrosyl radical cofactor of ribonucleotide reductase (RNR), probably by providing electrons for reduction during radical cofactor maturation in the catalytic small subunit. The chain is Anamorsin homolog 1 from Paramecium tetraurelia.